The sequence spans 334 residues: D-alanine--D-alanine ligase (334 aa).

Residues 111-315 (KRVCLSHGVP…YEDLCIEILR (205 aa)) form the ATP-grasp domain. 141–196 (AAEFGLPLMLKAPHEGSTIGIAKVETAEGMQAGFDLCAKYEAVVLVEQFVKGRELT) is an ATP binding site. Residues D268, E282, and N284 each coordinate Mg(2+).

It belongs to the D-alanine--D-alanine ligase family. The cofactor is Mg(2+). It depends on Mn(2+) as a cofactor.

It localises to the cytoplasm. The catalysed reaction is 2 D-alanine + ATP = D-alanyl-D-alanine + ADP + phosphate + H(+). It participates in cell wall biogenesis; peptidoglycan biosynthesis. Functionally, cell wall formation. The polypeptide is D-alanine--D-alanine ligase (Herminiimonas arsenicoxydans).